The chain runs to 489 residues: Cobyric acid synthase (489 aa).

One can recognise a GATase cobBQ-type domain in the interval 247–439; it reads ALKVVVPVLP…IHGVFDEPAA (193 aa). Catalysis depends on cysteine 328, which acts as the Nucleophile. Residue histidine 431 is part of the active site.

It belongs to the CobB/CobQ family. CobQ subfamily.

It functions in the pathway cofactor biosynthesis; adenosylcobalamin biosynthesis. Functionally, catalyzes amidations at positions B, D, E, and G on adenosylcobyrinic A,C-diamide. NH(2) groups are provided by glutamine, and one molecule of ATP is hydrogenolyzed for each amidation. The chain is Cobyric acid synthase from Marinobacter nauticus (strain ATCC 700491 / DSM 11845 / VT8) (Marinobacter aquaeolei).